We begin with the raw amino-acid sequence, 129 residues long: Azurin-1 (129 aa).

The Plastocyanin-like domain occupies 1–129; that stretch reads AECSVDIAGN…LMKGVLKLVD (129 aa). C3 and C26 form a disulfide bridge. Cu cation is bound by residues H46, C112, H117, and M121.

Its subcellular location is the periplasm. Its function is as follows. Transfers electrons from cytochrome c551 to cytochrome oxidase. This Alcaligenes xylosoxydans xylosoxydans (Achromobacter xylosoxidans) protein is Azurin-1.